Reading from the N-terminus, the 249-residue chain is Sugar fermentation stimulation protein homolog (249 aa).

It belongs to the SfsA family.

The polypeptide is Sugar fermentation stimulation protein homolog (Synechococcus sp. (strain RCC307)).